Consider the following 95-residue polypeptide: Co-chaperonin GroES (95 aa).

This sequence belongs to the GroES chaperonin family. Heptamer of 7 subunits arranged in a ring. Interacts with the chaperonin GroEL.

The protein resides in the cytoplasm. Functionally, together with the chaperonin GroEL, plays an essential role in assisting protein folding. The GroEL-GroES system forms a nano-cage that allows encapsulation of the non-native substrate proteins and provides a physical environment optimized to promote and accelerate protein folding. GroES binds to the apical surface of the GroEL ring, thereby capping the opening of the GroEL channel. This is Co-chaperonin GroES from Rickettsia bellii (strain RML369-C).